The chain runs to 116 residues: Cysteine-rich venom protein Cau1 (116 aa).

Residues Ser-4–Tyr-42 form the SCP domain. 5 cysteine pairs are disulfide-bonded: Cys-24/Cys-40, Cys-62/Cys-69, Cys-65/Cys-74, Cys-87/Cys-105, and Cys-96/Cys-109. Residues Cys-78 to Cys-111 form the ShKT domain.

Belongs to the CRISP family. Expressed by the venom gland.

The protein resides in the secreted. In terms of biological role, blocks contraction of smooth muscle elicited by high potassium-induced depolarization, but does not block caffeine-stimulated contraction. May target voltage-gated calcium channels on smooth muscle. This is Cysteine-rich venom protein Cau1 from Causus rhombeatus (Rhombic night adder).